A 1432-amino-acid polypeptide reads, in one-letter code: Probable ATP-dependent RNA helicase spindle-E (1432 aa).

In terms of domain architecture, Helicase ATP-binding spans 124–291 (LAAINAHPVV…FTTTNSVPPV (168 aa)). 137–144 (GQTGCGKT) is an ATP binding site. The short motif at 237–240 (DEVH) is the DEAH box element. The Helicase C-terminal domain maps to 337–524 (KIIMVIDNME…NSVLRAKELE (188 aa)). The Tudor domain occupies 936–999 (AGAITKGMMV…RLMPKELIQQ (64 aa)).

This sequence belongs to the DEAD box helicase family. DEAH subfamily.

Its subcellular location is the cytoplasm. The catalysed reaction is ATP + H2O = ADP + phosphate + H(+). In terms of biological role, probable ATP-binding RNA helicase which plays a central role during spermatogenesis and oogenesis by repressing transposable elements and preventing their mobilization, which is essential for the germline integrity. Acts via the piRNA metabolic process, which mediates the repression of transposable elements during meiosis by forming complexes composed of piRNAs and Piwi and govern the methylation and subsequent repression of transposons. Involved in the repression of LTR retrotransposon copia. Also involved in telomere regulation by repressing specialized telomeric retroelements HeT-A, TAHRE, and TART; Drosophila telomeres being maintained by transposition of specialized telomeric retroelements. Involved in telomeric trans-silencing, a repression mechanism by which a transposon or a transgene inserted in subtelomeric heterochromatin has the capacity to repress in trans in the female germline, a homologous transposon, or transgene located in euchromatin. Involved in the repression of testis-expressed Stellate genes by the homologous Su(Ste) repeats. Required for anteroposterior and dorsoventral axis formation during oogenesis. This Drosophila erecta (Fruit fly) protein is Probable ATP-dependent RNA helicase spindle-E (spn-E).